A 111-amino-acid polypeptide reads, in one-letter code: UPF0339 protein in ptx operon 5'region (111 aa).

Repeat copies occupy residues 10 to 58 (DKAG…RYER) and 61 to 109 (SGAD…VVEV).

This sequence belongs to the UPF0339 family. Duplicated subfamily.

The chain is UPF0339 protein in ptx operon 5'region from Stutzerimonas stutzeri (Pseudomonas stutzeri).